A 215-amino-acid polypeptide reads, in one-letter code: uncharacterized protein (215 aa).

This is an uncharacterized protein from Haemophilus influenzae (strain ATCC 51907 / DSM 11121 / KW20 / Rd).